The primary structure comprises 130 residues: Probable 4-amino-4-deoxy-L-arabinose-phosphoundecaprenol flippase subunit ArnF (130 aa).

Topologically, residues 1–4 (MRGY) are cytoplasmic. The helical transmembrane segment at 5–25 (AWGAASVLLVTLAQLLMKWGM) threads the bilayer. Residues 26-47 (AQIPLMSFADVTLNLFMQYWLP) lie on the Periplasmic side of the membrane. A helical transmembrane segment spans residues 48–68 (LVVVSGGIFGYALSMLCWFFA). The Cytoplasmic segment spans residues 69-77 (LHHLPLNRA). The helical transmembrane segment at 78 to 98 (YPLLSVSYALVYLAAVILPWF) threads the bilayer. Asn99 is a topological domain (periplasmic). The chain crosses the membrane as a helical span at residues 100-120 (ESATLLKTLGTLFILFGVWLI). Over 121-130 (NSQAKVKTPQ) the chain is Cytoplasmic.

This sequence belongs to the ArnF family. As to quaternary structure, heterodimer of ArnE and ArnF.

The protein resides in the cell inner membrane. It participates in bacterial outer membrane biogenesis; lipopolysaccharide biosynthesis. Its function is as follows. Translocates 4-amino-4-deoxy-L-arabinose-phosphoundecaprenol (alpha-L-Ara4N-phosphoundecaprenol) from the cytoplasmic to the periplasmic side of the inner membrane. The protein is Probable 4-amino-4-deoxy-L-arabinose-phosphoundecaprenol flippase subunit ArnF of Serratia proteamaculans (strain 568).